Here is a 476-residue protein sequence, read N- to C-terminus: TOM1-like protein 1 (476 aa).

Residues 22-154 (ATFAGVQTED…DLVKKGVQFP (133 aa)) enclose the VHS domain. Residues 155-179 (PSEAEAETARQETAQISSNPPTSVP) are disordered. Over residues 170-179 (ISSNPPTSVP) the composition is skewed to polar residues. At serine 171 the chain carries Phosphoserine. The GAT domain occupies 200 to 288 (EQIGKLHSEL…AILGYERFTR (89 aa)). The segment covering 298-314 (KNQKEATNTTSEPSAPS) has biased composition (polar residues). The segment at 298–327 (KNQKEATNTTSEPSAPSQDLLDLSPSPRMP) is disordered. Residues serine 314, serine 321, and serine 323 each carry the phosphoserine modification. The interval 392–395 (YDNF) is interaction with GRB2. The SH3-binding signature appears at 421-425 (LPPLP). The segment at 442-445 (YEVM) is interaction with PIK3R1. Tyrosine 460 is subject to Phosphotyrosine. An SH2-binding motif is present at residues 460–463 (YEEI).

The protein belongs to the TOM1 family. As to quaternary structure, interacts with FYN, GRB2 and PIK3R1 when phosphorylated. Interacts with LYN. In terms of processing, phosphorylated on tyrosines by FYN and LYN.

It localises to the golgi apparatus. The protein localises to the golgi stack. It is found in the endosome membrane. Its subcellular location is the cytoplasm. The protein resides in the membrane. In terms of biological role, probable adapter protein involved in signaling pathways. Interacts with the SH2 and SH3 domains of various signaling proteins when it is phosphorylated. May promote FYN activation, possibly by disrupting intramolecular SH3-dependent interactions. This is TOM1-like protein 1 (TOM1L1) from Homo sapiens (Human).